Here is a 556-residue protein sequence, read N- to C-terminus: Melanoma-associated antigen B4 (556 aa).

Positions 1 to 15 (MPRGQKSKARAREKR) are enriched in basic residues. The tract at residues 1-110 (MPRGQKSKAR…RFSENPQNDL (110 aa)) is disordered. Residues 39–73 (PSCSNQDSGDAVASTSTAGFPQKSKSQGEAPTTTA) show a composition bias toward polar residues. Positions 77–87 (GACRRSRKSTR) are enriched in basic residues. The MAGE domain occupies 111–310 (LTRKTGMLMQ…QAFPTHYEEA (200 aa)). The disordered stretch occupies residues 315 to 335 (EERAQAEAVGSPGTSAKDKAE). Serine 325 carries the phosphoserine modification. A run of 15 repeats spans residues 334 to 348 (AEAK…CKYQ), 349 to 363 (AESK…CKDQ), 364 to 378 (AESK…CKDN), 379 to 392 (AKSK…RKYK), 393 to 407 (AKSK…CKDQ), 408 to 421 (AESK…CKDQ), 422 to 436 (AESK…CKDQ), 437 to 451 (AESK…CKDQ), 452 to 466 (AESK…CKDK), 467 to 480 (AKSK…HKYK), 481 to 495 (AKSK…CKDQ), 496 to 510 (AESK…CKDQ), 511 to 525 (AESK…CKDN), 526 to 539 (AKSK…RKYK), and 540 to 554 (AKSK…GKDK). The 15 X 15 AA approximate tandem repeats stretch occupies residues 334-554 (AEAKVTLVDS…PLVDSSGKDK (221 aa)).

As to expression, expressed in testis (at protein level).

It localises to the cytoplasm. In Mus musculus (Mouse), this protein is Melanoma-associated antigen B4.